Reading from the N-terminus, the 24-residue chain is Brevinin-1BYc (24 aa).

A disulfide bond links C18 and C24.

In terms of tissue distribution, expressed by the skin glands.

It is found in the secreted. In terms of biological role, antibacterial activity against Gram-positive bacterium S.aureus. Weak antifungal activity against C.albicans. This is Brevinin-1BYc from Rana boylii (Foothill yellow-legged frog).